A 299-amino-acid polypeptide reads, in one-letter code: Transcription factor BHLH148 (299 aa).

The tract at residues 90 to 127 (RMGGGGGGGEKGEGEEMEEEEEVPQRRRRGQGADVESS) is disordered. Residues 102 to 111 (EGEEMEEEEE) show a composition bias toward acidic residues. Residues 127–140 (SRGFRHMMRERQRR) are basic motif; degenerate. Positions 127 to 176 (SRGFRHMMRERQRREKLSQSYADLYAMVSSRSKGDKNSIVQSAAIYIHEL) constitute a bHLH domain. The helix-loop-helix motif stretch occupies residues 141-176 (EKLSQSYADLYAMVSSRSKGDKNSIVQSAAIYIHEL). The segment at 273-299 (ERNQPDSDAPFPGSKGWTQTSHVQNVF) is disordered. Polar residues predominate over residues 288–299 (GWTQTSHVQNVF).

The protein belongs to the bHLH protein family. Interacts with TIFY10A/JAZ6, TIFY10B/JAZ7, TIFY11A/JAZ9, TIFY11C/JAZ11, and TIFY11D/JAZ12.

It localises to the nucleus. May act on an initial response of jasmonate-regulated gene expression toward drought tolerance as part of a BHLH148-TIFY11D/JAZ12-COI1A complex. This chain is Transcription factor BHLH148, found in Oryza sativa subsp. japonica (Rice).